Here is a 38-residue protein sequence, read N- to C-terminus: Photosystem II reaction center protein L (38 aa).

The helical transmembrane segment at 17 to 37 (SLFWGLLLIFVLAVLFSSYFF) threads the bilayer.

This sequence belongs to the PsbL family. PSII is composed of 1 copy each of membrane proteins PsbA, PsbB, PsbC, PsbD, PsbE, PsbF, PsbH, PsbI, PsbJ, PsbK, PsbL, PsbM, PsbT, PsbY, PsbZ, Psb30/Ycf12, at least 3 peripheral proteins of the oxygen-evolving complex and a large number of cofactors. It forms dimeric complexes.

The protein localises to the plastid. The protein resides in the chloroplast thylakoid membrane. In terms of biological role, one of the components of the core complex of photosystem II (PSII). PSII is a light-driven water:plastoquinone oxidoreductase that uses light energy to abstract electrons from H(2)O, generating O(2) and a proton gradient subsequently used for ATP formation. It consists of a core antenna complex that captures photons, and an electron transfer chain that converts photonic excitation into a charge separation. This subunit is found at the monomer-monomer interface and is required for correct PSII assembly and/or dimerization. This is Photosystem II reaction center protein L from Cyanidium caldarium (Red alga).